A 50-amino-acid polypeptide reads, in one-letter code: Small ribosomal subunit protein eS31 (50 aa).

Residues C22, C25, C40, and C43 each coordinate Zn(2+). The segment at 22–43 (CPRCGPGVFMADHGDRWACGKC) adopts a C4-type zinc-finger fold.

Belongs to the eukaryotic ribosomal protein eS31 family. As to quaternary structure, part of the 30S ribosomal subunit. Zn(2+) serves as cofactor.

This Pyrococcus furiosus (strain ATCC 43587 / DSM 3638 / JCM 8422 / Vc1) protein is Small ribosomal subunit protein eS31.